The chain runs to 140 residues: Large ribosomal subunit protein uL16 (140 aa).

It belongs to the universal ribosomal protein uL16 family. Part of the 50S ribosomal subunit.

Binds 23S rRNA and is also seen to make contacts with the A and possibly P site tRNAs. The chain is Large ribosomal subunit protein uL16 from Trichlorobacter lovleyi (strain ATCC BAA-1151 / DSM 17278 / SZ) (Geobacter lovleyi).